Reading from the N-terminus, the 340-residue chain is PI-PLC X domain-containing protein 2 (340 aa).

The PI-PLC X-box domain occupies 42 to 215 (HLHNVPLSNL…KYQVLIFYHC (174 aa)). Residues His-57 and His-132 contribute to the active site.

Expressed at highest levels in brain, followed by stomach and small intestine. Detected at low levels in kidney, ey, thymus and slkeletal muscle.

It localises to the nucleus. It carries out the reaction a 1,2-diacyl-sn-glycero-3-phospho-(1D-myo-inositol) + H2O = 1D-myo-inositol 1-phosphate + a 1,2-diacyl-sn-glycerol + H(+). Its function is as follows. Catalyzes the hydrolysis of inositol from phosphatidylinositol (1,2-diacyl-sn-glycero-3-phospho-(1D-myo-inositol), PI). Could also hydrolyze various multi-phosphorylated derivatives of PI, such as phosphatidylinositol-4,5 bisphosphate (PIP2), releasing inositol-1,4,5-trisphosphate (IP3) and the protein kinase C activator diacylglycerol (DAG), therefore mediating cell signaling. The sequence is that of PI-PLC X domain-containing protein 2 (Plcxd2) from Mus musculus (Mouse).